A 189-amino-acid polypeptide reads, in one-letter code: Phomopsin biosynthesis cluster protein C' (189 aa).

This sequence belongs to the oryJ family.

Its function is as follows. Part of the gene cluster that mediates the biosynthesis of the phomopsins, a group of hexapeptide mycotoxins which infects lupins and causes lupinosis disease in livestock. The role of phomC' within the phomopsins biosynthesis pathway has still to be determined. The pathway starts with the processing of the precursor phomA by several endopeptidases including kexin proteases as well as the cluster-specific S41 family peptidase phomP1 and the oligopeptidase phomG to produce 10 identical copies of the hexapeptide Tyr-Val-Ile-Pro-Ile-Asp. After being excised from the precursor peptide, the core peptides are cyclized and modified post-translationally by enzymes encoded within the gene cluster. The timing and order of proteolysis of the phomA precursor and PTMs are still unknown. Two tyrosinase-like enzymes, phomQ1 and phomQ2, catalyze the chlorination and hydroxylation of Tyr, respectively. PhomYb, is proposed to be involved in the construction of the macrocyclic structure. The other 4 ustYa family proteins may be involved in PTMs that generate the unique structure of phomopsin A. PhomYa is required for the hydroxylation of C-beta of Tyr. PhomYc, phomYd, and phomYe are responsible for the biosynthesis of 2,3-dehydroisoleucine (dIle), 2,3-dehydroaspartic acid (dAsp), and 3,4-dehydroproline (dPro), respectively. While dIle formation by phomYc is indispensable for the installation of dAsp by phomYd, the order of the other PTMs have not been elucidated yet. Most of the biosynthetic enzymes likely have broad substrate specificity, and thus, there might be a metabolic grid from a precursor to phomopsin A. The enzyme(s) responsible for the biosynthesis of 3,4-dehydrovaline (dVal) have also not been identified yet. Finally, phomM acts as an S-adenosylmethionine-dependent alpha-N-methyltransferase that catalyzes two successive N-methylation reactions, converting N-desmethyl-phomopsin A to phomopsin A and phomopsin A further to an N,N-dimethylated congener called phomopsin E. This is Phomopsin biosynthesis cluster protein C' from Diaporthe leptostromiformis (Lupinosis disease fungus).